Consider the following 849-residue polypeptide: Autoinducer 1 sensor kinase/phosphatase LuxN (849 aa).

Helical transmembrane passes span 9 to 29 (IVYA…MWLF), 41 to 61 (VIFG…IAWI), 160 to 180 (SYFF…LVAM), 196 to 216 (IAGI…MTYF), 220 to 242 (FSLT…YALL), 251 to 275 (YIAY…AIFI), and 283 to 301 (WLIA…QLLY). The Histidine kinase domain occupies 468-683 (SIAHEMRNPL…EFHLYFPVVP (216 aa)). His471 carries the post-translational modification Phosphohistidine; by autocatalysis. Positions 722-835 (TVLIVDDKEV…ALRHVLGNWL (114 aa)) constitute a Response regulatory domain. Asp771 bears the 4-aspartylphosphate mark.

It is found in the cell inner membrane. The enzyme catalyses ATP + protein L-histidine = ADP + protein N-phospho-L-histidine.. With respect to regulation, the phosphatase activity is constitutive and the kinase activity is regulated by the presence or absence of AI-1. At low cell density the kinase activity overrides the phosphatase activity. Functionally, at low cell density, in the absence of AI-1 (autoinducer 1), LuxN has a kinase activity and autophosphorylates on His-471. The phosphoryl group is then transferred on Asp-771 of the response regulator domain. The phosphoryl group is transferred to LuxU, and ultimately to LuxO. At high cell density, in the presence of AI-1, the kinase activity is inactivated, and the response regulator domain has a phosphatase activity. LuxN phosphatase acts on itself. As LuxU could function to establish an equilibrium between the aspartyl-phosphate of LuxN and the aspartyl-phosphate of LuxO, LuxU transfers phosphate from LuxO to LuxN and finally phosphate is drained from the system. The polypeptide is Autoinducer 1 sensor kinase/phosphatase LuxN (luxN) (Vibrio campbellii (strain ATCC BAA-1116)).